The following is a 37-amino-acid chain: Protease 2 large chain (37 aa).

The segment covering 1-14 (NDGNGRDSDPHDPG) has biased composition (basic and acidic residues). The tract at residues 1–37 (NDGNGRDSDPHDPGDWTTAGQCGLWQPARNSQHWTLV) is disordered. Positions 28–37 (ARNSQHWTLV) are enriched in polar residues.

This sequence belongs to the peptidase S8 family. In terms of assembly, heterodimer of a large and a small chain.

The protein localises to the secreted. This is Protease 2 large chain from Achromobacter lyticus.